The sequence spans 126 residues: Adenosine 5'-monophosphoramidase HINT1 (126 aa).

Ala-2 is modified (N-acetylalanine). An HIT domain is found at Ile-18 to Gly-126. N6-acetyllysine occurs at positions 21 and 30. Asp-43 to Ile-44 is an AMP binding site. A phosphoserine mark is found at Ser-45 and Ser-72. Residues Asn-99, Gly-105 to Ser-107, and His-112 to His-114 contribute to the AMP site. The short motif at His-110–His-114 is the Histidine triad motif element. The Tele-AMP-histidine intermediate role is filled by His-112.

It belongs to the HINT family. As to quaternary structure, homodimer. Interacts with CDK7. Interacts with RUVBL1 and RUVBL2 and is associated with the LEF1/TCF1-CTNNB1 complex and with a KAT5 histone acetyltransferase complex. Identified in a complex with MITF and CTNNB1. Interacts with CDC34 and RBX1, and is part of a SCF (SKP2-CUL1-F-box protein) E3 ubiquitin-protein ligase complex. Interacts with SUMO1, SUMO2 and RGS17. Interacts with the Ten-1 ICD form of TENM1. Interacts with CALM1; interaction increases in the presence of calcium ions.

It localises to the cytoplasm. The protein localises to the nucleus. The catalysed reaction is adenosine 5'-phosphoramidate + H2O = AMP + NH4(+). Exhibits adenosine 5'-monophosphoramidase activity, hydrolyzing purine nucleotide phosphoramidates with a single phosphate group such as adenosine 5'monophosphoramidate (AMP-NH2) to yield AMP and NH2. Hydrolyzes adenosine 5'monophosphomorpholidate (AMP-morpholidate) and guanosine 5'monophosphomorpholidate (GMP-morpholidate). Hydrolyzes lysyl-AMP (AMP-N-epsilon-(N-alpha-acetyl lysine methyl ester)) generated by lysine tRNA ligase, as well as Met-AMP, His-AMP and Asp-AMP, lysyl-GMP (GMP-N-epsilon-(N-alpha-acetyl lysine methyl ester)) and AMP-N-alanine methyl ester. Can also convert adenosine 5'-O-phosphorothioate and guanosine 5'-O-phosphorothioate to the corresponding nucleoside 5'-O-phosphates with concomitant release of hydrogen sulfide. In addition, functions as a scaffolding protein that modulates transcriptional activation by the LEF1/TCF1-CTNNB1 complex and by the complex formed with MITF and CTNNB1. Modulates p53/TP53 levels and p53/TP53-mediated apoptosis. Modulates proteasomal degradation of target proteins by the SCF (SKP2-CUL1-F-box protein) E3 ubiquitin-protein ligase complex. Also exhibits SUMO-specific isopeptidase activity, deconjugating SUMO1 from RANGAP1 and RGS17. This chain is Adenosine 5'-monophosphoramidase HINT1 (Hint1), found in Rattus norvegicus (Rat).